The sequence spans 106 residues: Malonate decarboxylase acyl carrier protein (106 aa).

Residue S28 is modified to O-(phosphoribosyl dephospho-coenzyme A)serine.

This sequence belongs to the MdcC family. In terms of processing, covalently binds the prosthetic group of malonate decarboxylase.

The protein localises to the cytoplasm. Subunit of malonate decarboxylase, it is an acyl carrier protein to which acetyl and malonyl thioester residues are bound via a 2'-(5''-phosphoribosyl)-3'-dephospho-CoA prosthetic group and turn over during the catalytic mechanism. The chain is Malonate decarboxylase acyl carrier protein from Stenotrophomonas maltophilia (strain K279a).